Consider the following 197-residue polypeptide: MNSTQSPVYRTSVEQKRHAQEVAKRQRMGNQMPRLREMLREKYRKRIIETRNRCTDAQREIQLSELREILRLELSELEKDVELEELILEELLSDVNEWYALGEKNLETLYAEPDEQQKEVLCPVCQIKNLRHHKGAFICECGIRFEHSANMEQLQILLQQQIASHELQCTQALRFFIEPASGQLYDMCGSCDYFSSV.

The disordered stretch occupies residues 1–20; that stretch reads MNSTQSPVYRTSVEQKRHAQ. The segment at 122–191 adopts an RIP-type zinc-finger fold; the sequence is CPVCQIKNLR…GQLYDMCGSC (70 aa).

This Drosophila melanogaster (Fruit fly) protein is RIP-like protein (Ripalpha).